The chain runs to 175 residues: RNA pyrophosphohydrolase (175 aa).

In terms of domain architecture, Nudix hydrolase spans 8–159 (PYRTCVGMML…KRPVYERVVK (152 aa)). The short motif at 47 to 68 (GGVDPGEDPWTAAKRELYEETS) is the Nudix box element.

The protein belongs to the Nudix hydrolase family. RppH subfamily. It depends on a divalent metal cation as a cofactor.

In terms of biological role, accelerates the degradation of transcripts by removing pyrophosphate from the 5'-end of triphosphorylated RNA, leading to a more labile monophosphorylated state that can stimulate subsequent ribonuclease cleavage. This is RNA pyrophosphohydrolase from Rhodopseudomonas palustris (strain BisB18).